The primary structure comprises 427 residues: Serine--tRNA ligase (427 aa).

An L-serine-binding site is contributed by 231-233 (TAE). ATP-binding positions include 262–264 (RRE) and Val278. Residue Glu285 coordinates L-serine. 349–352 (EVSS) contributes to the ATP binding site. Ser384 lines the L-serine pocket.

Belongs to the class-II aminoacyl-tRNA synthetase family. Type-1 seryl-tRNA synthetase subfamily. In terms of assembly, homodimer. The tRNA molecule binds across the dimer.

The protein localises to the cytoplasm. The enzyme catalyses tRNA(Ser) + L-serine + ATP = L-seryl-tRNA(Ser) + AMP + diphosphate + H(+). It catalyses the reaction tRNA(Sec) + L-serine + ATP = L-seryl-tRNA(Sec) + AMP + diphosphate + H(+). It functions in the pathway aminoacyl-tRNA biosynthesis; selenocysteinyl-tRNA(Sec) biosynthesis; L-seryl-tRNA(Sec) from L-serine and tRNA(Sec): step 1/1. In terms of biological role, catalyzes the attachment of serine to tRNA(Ser). Is also able to aminoacylate tRNA(Sec) with serine, to form the misacylated tRNA L-seryl-tRNA(Sec), which will be further converted into selenocysteinyl-tRNA(Sec). The polypeptide is Serine--tRNA ligase (Chlamydia pneumoniae (Chlamydophila pneumoniae)).